The following is a 131-amino-acid chain: Small ribosomal subunit protein uS9 (131 aa).

The segment at 102-131 (AGFLTRDPRMKERRKYGLKKARKAPQFSKR) is disordered. Residues 112 to 131 (KERRKYGLKKARKAPQFSKR) show a composition bias toward basic residues.

Belongs to the universal ribosomal protein uS9 family.

This is Small ribosomal subunit protein uS9 from Desulfitobacterium hafniense (strain DSM 10664 / DCB-2).